The chain runs to 369 residues: Nuclear hormone receptor family member nhr-64 (369 aa).

A DNA-binding region (nuclear receptor) is located at residues 67–142; it reads EKCQVDKAKR…ASTRGLRTTV (76 aa). 2 consecutive NR C4-type zinc fingers follow at residues 70–90 and 106–130; these read QVDK…CLRK and PANP…TLIR. The 233-residue stretch at 120 to 352 folds into the NR LBD domain; that stretch reads PDDPLLDTLI…NLMLELMLPN (233 aa).

Belongs to the nuclear hormone receptor family.

It is found in the nucleus. Its function is as follows. Orphan nuclear receptor. This is Nuclear hormone receptor family member nhr-64 (nhr-64) from Caenorhabditis elegans.